Consider the following 251-residue polypeptide: MRRPMVAGNWKMHGTRASVAELIEGLCKQSLPGSVDIAVMPASLFTCQVVDGLKATSIIVGAQDAAIQAEQGALTGEVASSQLADAGCKLVLVGHSERRQLIGEQDDVLNKKFAAIQAKGLTPVLCVGETLEERKAGQTLEVVGRQLDSVIAEFGVNALVNAVIAYEPVWAIGTGLTASPQEAQEVHAAIRAQLAKENAEVAQGVRLLYGGSVKAANAVELFSMPDIDGGLIGGASLNADEFGAICRAAGN.

Substrate is bound at residue 9 to 11 (NWK). Residue His95 is the Electrophile of the active site. Glu167 (proton acceptor) is an active-site residue. Substrate contacts are provided by residues Gly173, Ser212, and 233–234 (GG).

Belongs to the triosephosphate isomerase family. Homodimer.

The protein resides in the cytoplasm. It carries out the reaction D-glyceraldehyde 3-phosphate = dihydroxyacetone phosphate. It functions in the pathway carbohydrate biosynthesis; gluconeogenesis. It participates in carbohydrate degradation; glycolysis; D-glyceraldehyde 3-phosphate from glycerone phosphate: step 1/1. Involved in the gluconeogenesis. Catalyzes stereospecifically the conversion of dihydroxyacetone phosphate (DHAP) to D-glyceraldehyde-3-phosphate (G3P). This is Triosephosphate isomerase from Pseudomonas syringae pv. syringae (strain B728a).